Consider the following 759-residue polypeptide: uncharacterized protein (759 aa).

This is an uncharacterized protein from Escherichia coli (strain K12).